The primary structure comprises 545 residues: Esterase-5B (545 aa).

Residues 1–19 (MYCEKLILLLGCFWISSSA) form the signal peptide. A disulfide bridge links Cys-84 with Cys-103. N-linked (GlcNAc...) asparagine glycosylation is present at Asn-113. Ser-207 functions as the Acyl-ester intermediate in the catalytic mechanism. A disulfide bond links Cys-259 and Cys-271. Asn-421 carries N-linked (GlcNAc...) asparagine glycosylation. The active-site Charge relay system is His-467. Asn-507 is a glycosylation site (N-linked (GlcNAc...) asparagine). A disulfide bridge connects residues Cys-515 and Cys-536.

It belongs to the type-B carboxylesterase/lipase family. As to quaternary structure, homodimer.

It is found in the secreted. It catalyses the reaction a carboxylic ester + H2O = an alcohol + a carboxylate + H(+). The protein is Esterase-5B (Est-5B) of Drosophila miranda (Fruit fly).